We begin with the raw amino-acid sequence, 251 residues long: Probable transcriptional regulatory protein SYO3AOP1_0685 (251 aa).

This sequence belongs to the TACO1 family.

It is found in the cytoplasm. The chain is Probable transcriptional regulatory protein SYO3AOP1_0685 from Sulfurihydrogenibium sp. (strain YO3AOP1).